The sequence spans 1502 residues: Ras guanine nucleotide exchange factor P (1502 aa).

Residues 84 to 187 (FIIDNQVLDW…LLYSLMKFSE (104 aa)) form the Calponin-homology (CH) domain. 4 disordered regions span residues 216 to 242 (AQSS…SSNE), 325 to 436 (QQQQ…PNNN), 456 to 534 (EDNT…VGRG), and 589 to 935 (TTTA…NQNN). Composition is skewed to low complexity over residues 218 to 242 (SSSS…SSNE), 325 to 345 (QQQQ…TTTT), 371 to 400 (TTSS…LLNH), and 407 to 421 (SSST…PIST). A coiled-coil region spans residues 287–328 (QQQQQQQQQQQQQQQQQQQQQQQQQQQQQQQQQQQQQQQQQQ). Residues 422 to 436 (PSTSKSNSFQKPNNN) are compositionally biased toward polar residues. Residues 451 to 515 (EENEIEDNTN…NQNENEDEVK (65 aa)) adopt a coiled-coil conformation. Residues 458-508 (NTNNNNNNNNNNNNNNNNNNNNNNNNNNNNNNNNTNDNINNNNKNNNNNQN) are compositionally biased toward low complexity. Residues 518-528 (HSPPKVRPPLP) show a composition bias toward pro residues. Low complexity-rich tracts occupy residues 589-646 (TTTA…NNNN), 663-675 (TIST…TGTI), 686-719 (SQPL…LSLP), 764-790 (NSIN…VSQS), and 813-853 (NSNS…NNNN). A compositionally biased stretch (polar residues) spans 861 to 876 (LTMSNQSANSLKSSGN). Residues 883 to 935 (TNGNNNISQNQNQNQNQNQNQTQNQNQNQNQNHISHSNSISSGNLNNHVNQNN) are compositionally biased toward low complexity. The stretch at 1032–1076 (VEENKNLITRTEEMQKMIDSLMKEKKELINEKNTLASMLAKTKQQ) forms a coiled coil. An N-terminal Ras-GEF domain is found at 1102–1249 (GKYEIKGGTT…SELKLVFSTP (148 aa)). The region spanning 1267-1498 (DPAEIARQLT…FNLSLICEPR (232 aa)) is the Ras-GEF domain.

Its function is as follows. Promotes the exchange of Ras-bound GDP by GTP. This Dictyostelium discoideum (Social amoeba) protein is Ras guanine nucleotide exchange factor P (gefP).